The following is a 376-amino-acid chain: Transcription initiation factor IIA subunit 1 (376 aa).

A2 is modified (N-acetylalanine). Composition is skewed to low complexity over residues 69–79 and 89–105; these read QVQQQHQPQQQ and QAQP…TQQV. Disordered regions lie at residues 69–107, 246–265, and 274–329; these read QVQQ…QVLI, AQAQ…PAQT, and DGTG…QELF. Phosphoserine; by TAF1 occurs at positions 280, 281, 316, and 321. Residues 280 to 329 show a composition bias toward acidic residues; it reads SSEEDEDEEEDYDDDEEEDKEKDGAEDGQVEEEPLNSEDDVSDEEGQELF. DNA is bound by residues H343 and R344.

It belongs to the TFIIA subunit 1 family. TFIIA is a heterodimer of the large unprocessed subunit 1 and a small subunit gamma. It was originally believed to be a heterotrimer of an alpha (p35), a beta (p19) and a gamma subunit (p12). TFIIA forms a complex with TBP. Part of TBP-based Pol II pre-initiation complex (PIC), in which Pol II core assembles with general transcription factors and other specific initiation factors including GTF2E1, GTF2E2, GTF2F1, GTF2F2, TCEA1, ERCC2, ERCC3, GTF2H2, GTF2H3, GTF2H4, GTF2H5, GTF2A1, GTF2A2, GTF2B and TBP; this large multi-subunit PIC complex mediates DNA unwinding and targets Pol II core to the transcription start site where the first phosphodiester bond forms. The alpha and beta subunits are postranslationally produced from the precursor formby TASP1. The cleavage promotes proteasomal degradation.

The protein resides in the nucleus. Its function is as follows. TFIIA is a component of the transcription machinery of RNA polymerase II and plays an important role in transcriptional activation. TFIIA in a complex with TBP mediates transcriptional activity. The protein is Transcription initiation factor IIA subunit 1 (GTF2A1) of Pongo abelii (Sumatran orangutan).